The chain runs to 613 residues: Pesticidal crystal-like protein Cry16Aa (613 aa).

The protein belongs to the delta endotoxin family.

Its subcellular location is the secreted. Toxin active on mosquito larvae of the species Aedes aegypti, Culex pipiens and Anopheles stephensi. This is Pesticidal crystal-like protein Cry16Aa (cry16Aa) from Paraclostridium bifermentans (Clostridium bifermentans).